The following is a 303-amino-acid chain: Flavin-dependent thymidylate synthase (303 aa).

Positions 1 to 21 (MALTSEQRAEIEAQRSEPQLT) are disordered. In terms of domain architecture, ThyX spans 43–256 (GFLRVVDYMG…PATAAAFEEY (214 aa)). FAD is bound by residues threonine 89, 112 to 114 (RHR), and glutamate 120. DUMP contacts are provided by residues 109–112 (QWIR), 120–124 (EYSAR), and arginine 195. The ThyX motif motif lies at 112–122 (RHRMASVNEYS). Residues 211-213 (DLH) and histidine 217 contribute to the FAD site. Residue arginine 222 coordinates dUMP. Arginine 222 functions as the Involved in ionization of N3 of dUMP, leading to its activation in the catalytic mechanism.

It belongs to the thymidylate synthase ThyX family. Homotetramer. Requires FAD as cofactor.

It carries out the reaction dUMP + (6R)-5,10-methylene-5,6,7,8-tetrahydrofolate + NADPH + H(+) = dTMP + (6S)-5,6,7,8-tetrahydrofolate + NADP(+). It participates in pyrimidine metabolism; dTTP biosynthesis. Its function is as follows. Catalyzes the reductive methylation of 2'-deoxyuridine-5'-monophosphate (dUMP) to 2'-deoxythymidine-5'-monophosphate (dTMP) while utilizing 5,10-methylenetetrahydrofolate (mTHF) as the methyl donor, and NADPH and FADH(2) as the reductant. In Gluconobacter oxydans (strain 621H) (Gluconobacter suboxydans), this protein is Flavin-dependent thymidylate synthase.